The sequence spans 478 residues: MAQVMDFKVADLSLAEAGRHQIRLAEYEMPGLMQLRKEFADEQPLKGARIAGSIHMTVQTAVLIETLTALGAEVRWASCNIFSTQDEAAAAIVVGSGTVEEPAGVPVFAWKGESLEEYWWCINQIFSWGDELPNMILDDGGDATMAVIRGREYEQAGLVPPAEANDSDEYIAFLGMLREVLAAEPGKWGKIAEAVKGVTEETTTGVHRLYHFAEEGVLPFPAMNVNDAVTKSKFDNKYGTRHSLIDGINRATDMLMGGKNVLVCGYGDVGKGCAEAFDGQGARVKVTEADPINALQALMDGYSVVTVDEAIEDADIVITATGNKDIISFEQMLKMKDHALLGNIGHFDNEIDMHSLLHRDDVTRTTIKPQVDEFTFSTGRSIIVLSEGRLLNLGNATGHPSFVMSNSFADQTIAQIELFQNEGQYENEVYRLPKVLDEKVARIHVEALGGQLTELTKEQAEYIGVDVAGPFKPEHYRY.

T57, D139, and E201 together coordinate substrate. 202 to 204 is an NAD(+) binding site; the sequence is TTT. The substrate site is built by K231 and D235. Residues N236, 265-270, E288, N323, 344-346, and N392 contribute to the NAD(+) site; these read GYGDVG and IGH.

The protein belongs to the adenosylhomocysteinase family. It depends on NAD(+) as a cofactor.

It is found in the cytoplasm. It carries out the reaction S-adenosyl-L-homocysteine + H2O = L-homocysteine + adenosine. Its pathway is amino-acid biosynthesis; L-homocysteine biosynthesis; L-homocysteine from S-adenosyl-L-homocysteine: step 1/1. May play a key role in the regulation of the intracellular concentration of adenosylhomocysteine. In Corynebacterium glutamicum (strain R), this protein is Adenosylhomocysteinase.